A 329-amino-acid chain; its full sequence is Transposable element Tc3 transposase (329 aa).

Residues 2–135 mediate DNA binding; the sequence is PRGSALSDTE…LEFAKNNMGT (134 aa).

This sequence belongs to the transposase 5 family. Homodimer or homotetramer.

It is found in the nucleus. Binds specifically to the terminal nucleotides of the TC3 inverted repeat. Its expression results in frequent excision and transposition of endogenous TC3 elements. TC3 transposase acts by making double strand breaks at the ends of TC3 element. The excised element would then be inserted into a target sequence. In Caenorhabditis elegans, this protein is Transposable element Tc3 transposase (tc3a).